Here is a 244-residue protein sequence, read N- to C-terminus: Lipoprotein-releasing system ATP-binding protein LolD (244 aa).

In terms of domain architecture, ABC transporter spans 19–244 (IRAEALAKTY…KLRELAPSAV (226 aa)). Position 55-62 (55-62 (GASGAGKS)) interacts with ATP.

This sequence belongs to the ABC transporter superfamily. Lipoprotein translocase (TC 3.A.1.125) family. As to quaternary structure, the complex is composed of two ATP-binding proteins (LolD) and two transmembrane proteins (LolC and LolE).

Its subcellular location is the cell inner membrane. Its function is as follows. Part of the ABC transporter complex LolCDE involved in the translocation of mature outer membrane-directed lipoproteins, from the inner membrane to the periplasmic chaperone, LolA. Responsible for the formation of the LolA-lipoprotein complex in an ATP-dependent manner. This chain is Lipoprotein-releasing system ATP-binding protein LolD, found in Xanthomonas axonopodis pv. citri (strain 306).